The following is a 317-amino-acid chain: Ribonuclease 3-like protein 2 (317 aa).

A disordered region spans residues 1–26 (MAPPPAMKPASRKRGPPAPDPVELPP). A compositionally biased stretch (pro residues) spans 16–26 (PPAPDPVELPP). The 149-residue stretch at 37–185 (AARVERLLRY…IAAAVYVDCK (149 aa)) folds into the RNase III domain. Residues Glu-74, Asp-171, and Glu-174 each contribute to the Mg(2+) site. One can recognise a DRBM domain in the interval 211–274 (QPVTMLHELC…ARDATRKLAG (64 aa)).

It depends on Mg(2+) as a cofactor. Mn(2+) is required as a cofactor.

Functionally, cleaves double-stranded RNA (dsRNA). This is Ribonuclease 3-like protein 2 from Oryza sativa subsp. japonica (Rice).